Consider the following 77-residue polypeptide: uncharacterized protein (77 aa).

This is an uncharacterized protein from Escherichia phage 186 (Bacteriophage 186).